Consider the following 189-residue polypeptide: ATP synthase subunit delta (189 aa).

It belongs to the ATPase delta chain family. F-type ATPases have 2 components, F(1) - the catalytic core - and F(0) - the membrane proton channel. F(1) has five subunits: alpha(3), beta(3), gamma(1), delta(1), epsilon(1). F(0) has three main subunits: a(1), b(2) and c(10-14). The alpha and beta chains form an alternating ring which encloses part of the gamma chain. F(1) is attached to F(0) by a central stalk formed by the gamma and epsilon chains, while a peripheral stalk is formed by the delta and b chains.

Its subcellular location is the cell inner membrane. In terms of biological role, f(1)F(0) ATP synthase produces ATP from ADP in the presence of a proton or sodium gradient. F-type ATPases consist of two structural domains, F(1) containing the extramembraneous catalytic core and F(0) containing the membrane proton channel, linked together by a central stalk and a peripheral stalk. During catalysis, ATP synthesis in the catalytic domain of F(1) is coupled via a rotary mechanism of the central stalk subunits to proton translocation. Functionally, this protein is part of the stalk that links CF(0) to CF(1). It either transmits conformational changes from CF(0) to CF(1) or is implicated in proton conduction. The polypeptide is ATP synthase subunit delta (Rickettsia bellii (strain OSU 85-389)).